The primary structure comprises 590 residues: Phosphomethylpyrimidine synthase (590 aa).

Residues Asn-197, Met-226, Tyr-255, His-291, 311-313 (SRG), 352-355 (DGLR), and Glu-391 each bind substrate. Residue His-395 coordinates Zn(2+). Tyr-418 contacts substrate. His-459 provides a ligand contact to Zn(2+). [4Fe-4S] cluster contacts are provided by Cys-539, Cys-542, and Cys-547.

Belongs to the ThiC family. It depends on [4Fe-4S] cluster as a cofactor.

The enzyme catalyses 5-amino-1-(5-phospho-beta-D-ribosyl)imidazole + S-adenosyl-L-methionine = 4-amino-2-methyl-5-(phosphooxymethyl)pyrimidine + CO + 5'-deoxyadenosine + formate + L-methionine + 3 H(+). It participates in cofactor biosynthesis; thiamine diphosphate biosynthesis. Its function is as follows. Catalyzes the synthesis of the hydroxymethylpyrimidine phosphate (HMP-P) moiety of thiamine from aminoimidazole ribotide (AIR) in a radical S-adenosyl-L-methionine (SAM)-dependent reaction. In Bacillus subtilis (strain 168), this protein is Phosphomethylpyrimidine synthase.